The sequence spans 612 residues: Alpha-glycerophosphate oxidase (612 aa).

Asp21 to Glu49 serves as a coordination point for FAD. Over residues Val398 to Asp408 the composition is skewed to basic and acidic residues. The segment at Val398 to Phe418 is disordered.

Belongs to the FAD-dependent glycerol-3-phosphate dehydrogenase family. Requires FAD as cofactor.

It is found in the cytoplasm. The enzyme catalyses sn-glycerol 3-phosphate + O2 = dihydroxyacetone phosphate + H2O2. This is Alpha-glycerophosphate oxidase (glpO) from Streptococcus pyogenes serotype M18 (strain MGAS8232).